The chain runs to 388 residues: Succinate--CoA ligase [ADP-forming] subunit beta (388 aa).

Residues 9–236 (KKLFAEHGVP…VAAVDPLEQK (228 aa)) form the ATP-grasp domain. Residues K45, 52 to 54 (GRG), E91, S94, and E99 each bind ATP. N191 and D205 together coordinate Mg(2+). Substrate contacts are provided by residues N256 and 318–320 (GIT).

Belongs to the succinate/malate CoA ligase beta subunit family. Heterotetramer of two alpha and two beta subunits. The cofactor is Mg(2+).

It carries out the reaction succinate + ATP + CoA = succinyl-CoA + ADP + phosphate. The enzyme catalyses GTP + succinate + CoA = succinyl-CoA + GDP + phosphate. The protein operates within carbohydrate metabolism; tricarboxylic acid cycle; succinate from succinyl-CoA (ligase route): step 1/1. Succinyl-CoA synthetase functions in the citric acid cycle (TCA), coupling the hydrolysis of succinyl-CoA to the synthesis of either ATP or GTP and thus represents the only step of substrate-level phosphorylation in the TCA. The beta subunit provides nucleotide specificity of the enzyme and binds the substrate succinate, while the binding sites for coenzyme A and phosphate are found in the alpha subunit. The sequence is that of Succinate--CoA ligase [ADP-forming] subunit beta from Frankia casuarinae (strain DSM 45818 / CECT 9043 / HFP020203 / CcI3).